Reading from the N-terminus, the 310-residue chain is Ribosomal protein uL3 glutamine methyltransferase (310 aa).

The protein belongs to the protein N5-glutamine methyltransferase family. PrmB subfamily.

It catalyses the reaction L-glutaminyl-[ribosomal protein uL3] + S-adenosyl-L-methionine = N(5)-methyl-L-glutaminyl-[ribosomal protein uL3] + S-adenosyl-L-homocysteine + H(+). Its function is as follows. Methylates large ribosomal subunit protein uL3 on a specific glutamine residue. This chain is Ribosomal protein uL3 glutamine methyltransferase, found in Aliivibrio fischeri (strain ATCC 700601 / ES114) (Vibrio fischeri).